A 120-amino-acid chain; its full sequence is uncharacterized protein (120 aa).

3 helical membrane-spanning segments follow: residues 24–44, 61–81, and 86–106; these read ALLG…ALCY, IGVV…NLAV, and PLGK…GIVV.

It to M.leprae ML1176.

It localises to the cell membrane. This is an uncharacterized protein from Mycobacterium bovis (strain ATCC BAA-935 / AF2122/97).